A 441-amino-acid polypeptide reads, in one-letter code: Aminopeptidase C (441 aa).

Catalysis depends on residues Cys-70, His-361, and Asn-382.

The protein belongs to the peptidase C1 family.

The catalysed reaction is Inactivates bleomycin B2 (a cytotoxic glycometallopeptide) by hydrolysis of a carboxyamide bond of beta-aminoalanine, but also shows general aminopeptidase activity. The specificity varies somewhat with source, but amino acid arylamides of Met, Leu and Ala are preferred.. This Listeria monocytogenes serovar 1/2a (strain ATCC BAA-679 / EGD-e) protein is Aminopeptidase C (pepC).